The sequence spans 413 residues: Protein LAZY 1 (413 aa).

Residues 71-91 form a helical membrane-spanning segment; that stretch reads FTFGGSGLLTIGTLGIAAVAV. The segment covering 103–124 has biased composition (acidic residues); sequence DADADSDFDDNDDTAGDDEDQV. Disordered regions lie at residues 103-127 and 261-308; these read DADA…VDSA and EDGG…ASAT. 2 short sequence motifs (nuclear localization signal) span residues 275–298 and 338–345; these read RKAG…EKVP and KKSRKRGS.

Belongs to the LAZY family. As to expression, expressed in the node of the stem, initiating leaf founder cells, young leaf primordia, tips of axillary meristems, spikelet pair meristems of developing tassels and ears, male flower primordia, tassels, ears, silks and seeds. Expressed in leaf sheaths, leaf pulvinus and shoot apical meristem (SAM).

Its subcellular location is the cell membrane. It is found in the nucleus. Functionally, involved in the regulation of shoot gravitropism, and tassel and ear development through the regulation of polar auxin transport (PAT) and auxin signaling. Acts as a negative regulator of basipetal PAT, but positive regulator of lateral auxin transport. Involved in the regulation of shoot gravitropism and leaf angle through the regulation of cell development. The protein is Protein LAZY 1 of Zea mays (Maize).